The primary structure comprises 609 residues: Glutamine--fructose-6-phosphate aminotransferase [isomerizing] (609 aa).

The active-site Nucleophile; for GATase activity is the Cys-2. In terms of domain architecture, Glutamine amidotransferase type-2 spans 2–218; sequence CGIVGAIAQR…EGDIAEITRR (217 aa). SIS domains follow at residues 286–426 and 458–599; these read ADEL…LKGL and LAED…VDQP. Lys-604 functions as the For Fru-6P isomerization activity in the catalytic mechanism.

Homodimer.

It is found in the cytoplasm. The catalysed reaction is D-fructose 6-phosphate + L-glutamine = D-glucosamine 6-phosphate + L-glutamate. Its function is as follows. Catalyzes the first step in hexosamine metabolism, converting fructose-6P into glucosamine-6P using glutamine as a nitrogen source. This chain is Glutamine--fructose-6-phosphate aminotransferase [isomerizing], found in Escherichia coli O6:H1 (strain CFT073 / ATCC 700928 / UPEC).